We begin with the raw amino-acid sequence, 460 residues long: Biphenyl 2,3-dioxygenase subunit alpha (460 aa).

The Rieske domain occupies 56 to 165; it reads WLLMGHETQI…VETYKGLIFA (110 aa). The [2Fe-2S] cluster site is built by Cys98, His100, Cys118, and His121. A substrate-binding site is contributed by 217–230; the sequence is QFCSDMYHAGTTSH. Positions 224, 230, and 378 each coordinate Fe cation.

Belongs to the bacterial ring-hydroxylating dioxygenase alpha subunit family. In terms of assembly, heterohexamer consisting of three BphA1 subunits and three BphA2 subunits. The multicomponent biphenyl dioxygenase system is composed of a ferredoxin reductase (BphA4), a ferredoxin (BphA3), and a terminal oxygenase (BphA1A2). Requires [2Fe-2S] cluster as cofactor. It depends on Fe cation as a cofactor.

The catalysed reaction is biphenyl + NADH + O2 + H(+) = (2R,3S)-3-phenylcyclohexa-3,5-diene-1,2-diol + NAD(+). The protein operates within xenobiotic degradation; biphenyl degradation; 2-hydroxy-2,4-pentadienoate and benzoate from biphenyl: step 1/4. In terms of biological role, part of the oxygenase component of the biphenyl dioxygenase system that catalyzes the stereospecific dihydroxylation of the aromatic ring of biphenyl, yielding a dihydrodiol compound. Is essential for biphenyl degradation and growth of Rhodococcus sp. strain RHA1 on biphenyl as the sole source of carbon and energy. Can also use naphtalene and 4-chlorobiphenyl (4-CB) as substrates, as well as some polychlorinated biphenyls (PCB) such as 2,2'-dichlorobiphenyl, 2,3-dichlorobiphenyl and 2,5,2'-trichlorobiphenyl. Exhibits weak activity toward dibenzofuran and dibenzo-p-dioxin. Electrons are transferred from NADH to the [2Fe-2S] cluster in BphA1 via FAD of BphA4 and [2Fe-2S] cluster of BphA3. This is Biphenyl 2,3-dioxygenase subunit alpha from Rhodococcus jostii (strain RHA1).